A 400-amino-acid polypeptide reads, in one-letter code: Tryptophan synthase beta chain (400 aa).

An N6-(pyridoxal phosphate)lysine modification is found at K92.

The protein belongs to the TrpB family. Tetramer of two alpha and two beta chains. Requires pyridoxal 5'-phosphate as cofactor.

It carries out the reaction (1S,2R)-1-C-(indol-3-yl)glycerol 3-phosphate + L-serine = D-glyceraldehyde 3-phosphate + L-tryptophan + H2O. Its pathway is amino-acid biosynthesis; L-tryptophan biosynthesis; L-tryptophan from chorismate: step 5/5. Functionally, the beta subunit is responsible for the synthesis of L-tryptophan from indole and L-serine. The protein is Tryptophan synthase beta chain of Neisseria gonorrhoeae.